The following is a 483-amino-acid chain: Nuc-1 negative regulatory protein preg (483 aa).

3 stretches are compositionally biased toward low complexity: residues 1 to 32 (MLTR…PRPS), 60 to 80 (SSRR…PISI), and 176 to 200 (ASAL…AVAV). 3 disordered regions span residues 1–112 (MLTR…SRPQ), 164–234 (NTVG…SQGD), and 434–483 (CPEP…RHAT). Residues 435–473 (PEPEEADDEDEDEELDESDAIGDDDDDIDGEGGEREEET) show a composition bias toward acidic residues.

This sequence belongs to the cyclin family.

Its function is as follows. Negative regulator, together with pgov, of the transcriptional activator nuc-1, which controls the expression of phosphorous acquisition enzymes. The polypeptide is Nuc-1 negative regulatory protein preg (preg) (Neurospora crassa (strain ATCC 24698 / 74-OR23-1A / CBS 708.71 / DSM 1257 / FGSC 987)).